A 357-amino-acid polypeptide reads, in one-letter code: Probable cinnamyl alcohol dehydrogenase 7/8 (357 aa).

C47 is a Zn(2+) binding site. S49 contacts NADP(+). Zn(2+) contacts are provided by H69, E70, C100, C103, C106, C114, and C163. Residues T167, 188-193 (GLGGVG), 211-216 (SSSDKK), T251, G275, and 298-300 (SFI) contribute to the NADP(+) site.

The protein belongs to the zinc-containing alcohol dehydrogenase family. As to quaternary structure, homodimer. It depends on Zn(2+) as a cofactor.

The enzyme catalyses (E)-cinnamyl alcohol + NADP(+) = (E)-cinnamaldehyde + NADPH + H(+). The catalysed reaction is (E)-coniferol + NADP(+) = (E)-coniferaldehyde + NADPH + H(+). It catalyses the reaction (E)-sinapyl alcohol + NADP(+) = (E)-sinapaldehyde + NADPH + H(+). It carries out the reaction (E)-4-coumaroyl alcohol + NADP(+) = (E)-4-coumaraldehyde + NADPH + H(+). The enzyme catalyses (E)-caffeyl alcohol + NADP(+) = (E)-caffeyl aldehyde + NADPH + H(+). Its pathway is aromatic compound metabolism; phenylpropanoid biosynthesis. Its function is as follows. Involved in lignin biosynthesis. Catalyzes the final step specific for the production of lignin monomers. Catalyzes the NADPH-dependent reduction of coniferaldehyde, 5-hydroxyconiferaldehyde, sinapaldehyde, 4-coumaraldehyde and caffeyl aldehyde to their respective alcohols. This chain is Probable cinnamyl alcohol dehydrogenase 7/8 (CAD7), found in Picea abies (Norway spruce).